The primary structure comprises 399 residues: Elongation factor Tu (399 aa).

One can recognise a tr-type G domain in the interval 10–204 (KPHVNIGTIG…SVDESIPEPE (195 aa)). A G1 region spans residues 19-26 (GHVDHGKT). 19–26 (GHVDHGKT) is a GTP binding site. Residue Thr-26 participates in Mg(2+) binding. A G2 region spans residues 60-64 (GITIN). A G3 region spans residues 81 to 84 (DCPG). GTP contacts are provided by residues 81–85 (DCPGH) and 136–139 (NKCD). The interval 136 to 139 (NKCD) is G4. Residues 174–176 (SAL) form a G5 region.

The protein belongs to the TRAFAC class translation factor GTPase superfamily. Classic translation factor GTPase family. EF-Tu/EF-1A subfamily. Monomer.

The protein localises to the cytoplasm. The catalysed reaction is GTP + H2O = GDP + phosphate + H(+). Its function is as follows. GTP hydrolase that promotes the GTP-dependent binding of aminoacyl-tRNA to the A-site of ribosomes during protein biosynthesis. The chain is Elongation factor Tu from Prochlorococcus marinus (strain MIT 9211).